We begin with the raw amino-acid sequence, 465 residues long: MEYLPLFHNLKGRTVLIVGGGEIALRKARLLSEAGARLRVVAPSIEAQLVELVQAGAGECLDRGYARQDLQGCVLAIAATDDEPLNATVSQHANALGVPVNVVDSPQLCSVIFPAIVDRSPLVVAVSSGGDAPVLARLIRARIETWIPAAYGQLAGLAKQFRAQVKARFANVQQRRVFWEEVFQGPIAEQALAGRTAEAERLLAEKLAGVAPKALGEVYLVGAGPGDPDLLTFRALRLMQQADVVLYDRLVAPAIIDLCRRDADRIYVGKQRADHAVPQEQINQQLVTLAKQGKRVLRLKGGDPFIFGRGGEEIEELAAHGVPFQVVPGITAASGCAAYAGIPLTHRDHAQSVRFVTGHLKDGSCDLPWSELAAPAQTLVFYMGLVGLPVICQQLIAHGRSAETPAALVQQGTTSNQRVFTATLGTLAGRIAQEDVQAPTLLIVGEVVQLREKLAWFEGAQAAGR.

The segment at methionine 1–leucine 203 is precorrin-2 dehydrogenase /sirohydrochlorin ferrochelatase. Residues glutamate 22–isoleucine 23 and proline 43–serine 44 contribute to the NAD(+) site. Residue serine 128 is modified to Phosphoserine. Positions glycine 216 to arginine 465 are uroporphyrinogen-III C-methyltransferase. Proline 225 serves as a coordination point for S-adenosyl-L-methionine. Aspartate 248 functions as the Proton acceptor in the catalytic mechanism. Lysine 270 functions as the Proton donor in the catalytic mechanism. S-adenosyl-L-methionine-binding positions include glycine 301 to aspartate 303, isoleucine 306, threonine 331 to alanine 332, methionine 383, and glycine 412.

In the N-terminal section; belongs to the precorrin-2 dehydrogenase / sirohydrochlorin ferrochelatase family. The protein in the C-terminal section; belongs to the precorrin methyltransferase family.

The enzyme catalyses uroporphyrinogen III + 2 S-adenosyl-L-methionine = precorrin-2 + 2 S-adenosyl-L-homocysteine + H(+). The catalysed reaction is precorrin-2 + NAD(+) = sirohydrochlorin + NADH + 2 H(+). It catalyses the reaction siroheme + 2 H(+) = sirohydrochlorin + Fe(2+). It functions in the pathway cofactor biosynthesis; adenosylcobalamin biosynthesis; precorrin-2 from uroporphyrinogen III: step 1/1. The protein operates within cofactor biosynthesis; adenosylcobalamin biosynthesis; sirohydrochlorin from precorrin-2: step 1/1. It participates in porphyrin-containing compound metabolism; siroheme biosynthesis; precorrin-2 from uroporphyrinogen III: step 1/1. Its pathway is porphyrin-containing compound metabolism; siroheme biosynthesis; siroheme from sirohydrochlorin: step 1/1. It functions in the pathway porphyrin-containing compound metabolism; siroheme biosynthesis; sirohydrochlorin from precorrin-2: step 1/1. Functionally, multifunctional enzyme that catalyzes the SAM-dependent methylations of uroporphyrinogen III at position C-2 and C-7 to form precorrin-2 via precorrin-1. Then it catalyzes the NAD-dependent ring dehydrogenation of precorrin-2 to yield sirohydrochlorin. Finally, it catalyzes the ferrochelation of sirohydrochlorin to yield siroheme. The protein is Siroheme synthase of Stutzerimonas stutzeri (strain A1501) (Pseudomonas stutzeri).